The primary structure comprises 498 residues: Glycerol kinase (498 aa).

Position 12 (T12) interacts with ADP. Residues T12, T13, and S14 each coordinate ATP. Position 12 (T12) interacts with sn-glycerol 3-phosphate. Residue R16 coordinates ADP. Sn-glycerol 3-phosphate-binding residues include R82, E83, Y134, and D243. Positions 82, 83, 134, 243, and 244 each coordinate glycerol. 2 residues coordinate ADP: T265 and G308. T265, G308, Q312, and G409 together coordinate ATP. Positions 409 and 413 each coordinate ADP.

This sequence belongs to the FGGY kinase family. As to quaternary structure, homotetramer and homodimer (in equilibrium).

It carries out the reaction glycerol + ATP = sn-glycerol 3-phosphate + ADP + H(+). Its pathway is polyol metabolism; glycerol degradation via glycerol kinase pathway; sn-glycerol 3-phosphate from glycerol: step 1/1. Activated by phosphorylation and inhibited by fructose 1,6-bisphosphate (FBP). Its function is as follows. Key enzyme in the regulation of glycerol uptake and metabolism. Catalyzes the phosphorylation of glycerol to yield sn-glycerol 3-phosphate. This chain is Glycerol kinase, found in Clostridium botulinum (strain Okra / Type B1).